The chain runs to 330 residues: D-alanine--D-alanine ligase (330 aa).

The ATP-grasp domain occupies Lys120–Arg326. Residue Ala150 to Glu205 participates in ATP binding. Asp280, Glu293, and Asn295 together coordinate Mg(2+).

It belongs to the D-alanine--D-alanine ligase family. Mg(2+) is required as a cofactor. Requires Mn(2+) as cofactor.

It is found in the cytoplasm. It carries out the reaction 2 D-alanine + ATP = D-alanyl-D-alanine + ADP + phosphate + H(+). It functions in the pathway cell wall biogenesis; peptidoglycan biosynthesis. Its function is as follows. Cell wall formation. This Tolumonas auensis (strain DSM 9187 / NBRC 110442 / TA 4) protein is D-alanine--D-alanine ligase.